Consider the following 427-residue polypeptide: Enolase (427 aa).

(2R)-2-phosphoglycerate is bound at residue glutamine 163. Glutamate 205 (proton donor) is an active-site residue. Mg(2+) is bound by residues aspartate 242, glutamate 285, and aspartate 312. (2R)-2-phosphoglycerate-binding residues include lysine 337, arginine 366, serine 367, and lysine 388. The active-site Proton acceptor is lysine 337.

The protein belongs to the enolase family. The cofactor is Mg(2+).

The protein localises to the cytoplasm. The protein resides in the secreted. It is found in the cell surface. It catalyses the reaction (2R)-2-phosphoglycerate = phosphoenolpyruvate + H2O. It functions in the pathway carbohydrate degradation; glycolysis; pyruvate from D-glyceraldehyde 3-phosphate: step 4/5. Its function is as follows. Catalyzes the reversible conversion of 2-phosphoglycerate (2-PG) into phosphoenolpyruvate (PEP). It is essential for the degradation of carbohydrates via glycolysis. This Burkholderia ambifaria (strain MC40-6) protein is Enolase.